Consider the following 304-residue polypeptide: Nod factor export ATP-binding protein I (304 aa).

An ABC transporter domain is found at isoleucine 6 to tyrosine 236. ATP is bound at residue glycine 38 to threonine 45.

It belongs to the ABC transporter superfamily. Lipooligosaccharide exporter (TC 3.A.1.102) family. The complex is composed of two ATP-binding proteins (NodI) and two transmembrane proteins (NodJ).

It localises to the cell inner membrane. Its function is as follows. Part of the ABC transporter complex NodIJ involved in the export of the nodulation factors (Nod factors), the bacterial signal molecules that induce symbiosis and subsequent nodulation induction. Nod factors are LCO (lipo-chitin oligosaccharide), a modified beta-1,4-linked N-acetylglucosamine oligosaccharide. This subunit is responsible for energy coupling to the transport system. This chain is Nod factor export ATP-binding protein I, found in Burkholderia pseudomallei (strain 1710b).